The following is a 305-amino-acid chain: Acetylglutamate kinase (305 aa).

Residues 67 to 68, Arg89, and Asn190 each bind substrate; that span reads GG.

Belongs to the acetylglutamate kinase family. ArgB subfamily.

It is found in the cytoplasm. The enzyme catalyses N-acetyl-L-glutamate + ATP = N-acetyl-L-glutamyl 5-phosphate + ADP. Its pathway is amino-acid biosynthesis; L-arginine biosynthesis; N(2)-acetyl-L-ornithine from L-glutamate: step 2/4. Its function is as follows. Catalyzes the ATP-dependent phosphorylation of N-acetyl-L-glutamate. The chain is Acetylglutamate kinase from Bifidobacterium longum (strain NCC 2705).